The following is a 500-amino-acid chain: Serine carboxypeptidase 3 (500 aa).

A signal peptide spans 1–21 (MATTPRLASLLLLLALCAAAA). Residues 22 to 73 (GALRLPPDASFPGAQAERLIRALNLLPGRPRRGLGAGAEDVAPGQLLERRVT) constitute a propeptide that is removed on maturation. Intrachain disulfides connect cysteine 126-cysteine 366, cysteine 294-cysteine 309, and cysteine 332-cysteine 337. Residue asparagine 144 is glycosylated (N-linked (GlcNAc...) asparagine). Residue serine 216 is part of the active site. The active site involves aspartate 404. Residue cysteine 407 coordinates substrate. Residue histidine 461 is part of the active site. Residues 485–500 (ESVPEEEPATTFYAAI) constitute a propeptide that is removed on maturation.

This sequence belongs to the peptidase S10 family. Monomer.

It catalyses the reaction Release of a C-terminal amino acid with broad specificity.. This chain is Serine carboxypeptidase 3 (CBP3), found in Triticum aestivum (Wheat).